The following is a 507-amino-acid chain: Probable Xaa-Pro aminopeptidase TRV_02643 (507 aa).

Mn(2+) is bound by residues Asp-275, Asp-286, Glu-434, and Glu-478.

This sequence belongs to the peptidase M24B family. The cofactor is Mn(2+).

The catalysed reaction is Release of any N-terminal amino acid, including proline, that is linked to proline, even from a dipeptide or tripeptide.. Functionally, catalyzes the removal of a penultimate prolyl residue from the N-termini of peptides. This Trichophyton verrucosum (strain HKI 0517) protein is Probable Xaa-Pro aminopeptidase TRV_02643.